Reading from the N-terminus, the 286-residue chain is Probable xyloglucan endotransglucosylase/hydrolase protein 23 (286 aa).

Positions 1–24 (MAMISYSTIVVALLASFMICSVSA) are cleaved as a signal peptide. Residues 25–214 (NFQRDVEITW…WSKAPFTASY (190 aa)) enclose the GH16 domain. E100 acts as the Nucleophile in catalysis. The active-site Proton donor is E104. Residue E104 participates in xyloglucan binding. N108 is a glycosylation site (N-linked (GlcNAc...) asparagine). Residues 117 to 119 (HTN), 127 to 129 (DRE), 193 to 194 (EW), and G198 each bind xyloglucan. C222 and C231 form a disulfide bridge. N233 is a glycosylation site (N-linked (GlcNAc...) asparagine). A disulfide bridge links C269 with C283. R274 contributes to the xyloglucan binding site.

This sequence belongs to the glycosyl hydrolase 16 family. XTH group 2 subfamily. In terms of processing, contains at least one intrachain disulfide bond essential for its enzymatic activity.

The protein resides in the secreted. Its subcellular location is the cell wall. It localises to the extracellular space. The protein localises to the apoplast. The enzyme catalyses breaks a beta-(1-&gt;4) bond in the backbone of a xyloglucan and transfers the xyloglucanyl segment on to O-4 of the non-reducing terminal glucose residue of an acceptor, which can be a xyloglucan or an oligosaccharide of xyloglucan.. Catalyzes xyloglucan endohydrolysis (XEH) and/or endotransglycosylation (XET). Cleaves and religates xyloglucan polymers, an essential constituent of the primary cell wall, and thereby participates in cell wall construction of growing tissues. This Arabidopsis thaliana (Mouse-ear cress) protein is Probable xyloglucan endotransglucosylase/hydrolase protein 23 (XTH23).